An 862-amino-acid polypeptide reads, in one-letter code: Squamosa promoter-binding-like protein 1 (862 aa).

The interval 55 to 98 is disordered; the sequence is KRRRVSPEDDDGEECINAATTNGDDGQISGQRGRSSEDEMPRQG. Over residues 72-87 the composition is skewed to polar residues; it reads AATTNGDDGQISGQRG. The SBP-type zinc-finger motif lies at 104–181; sequence GPCCQVDGCT…AQHNRRRRKV (78 aa). Residues cysteine 107, cysteine 112, cysteine 129, histidine 132, cysteine 148, cysteine 151, histidine 155, and cysteine 167 each coordinate Zn(2+). The short motif at 164-180 is the Bipartite nuclear localization signal element; sequence KKSCRSRLAQHNRRRRK.

In terms of tissue distribution, ubiquitous.

The protein localises to the nucleus. Its function is as follows. Trans-acting factor that binds specifically to the consensus nucleotide sequence 5'-TNCGTACAA-3'. The sequence is that of Squamosa promoter-binding-like protein 1 (SPL1) from Oryza sativa subsp. japonica (Rice).